The chain runs to 434 residues: Enolase (434 aa).

Q168 is a (2R)-2-phosphoglycerate binding site. Residue E210 is the Proton donor of the active site. Residues D247, E292, and D319 each coordinate Mg(2+). (2R)-2-phosphoglycerate contacts are provided by K344, R373, S374, and K395. The active-site Proton acceptor is the K344.

Belongs to the enolase family. Mg(2+) is required as a cofactor.

It localises to the cytoplasm. The protein localises to the secreted. The protein resides in the cell surface. The catalysed reaction is (2R)-2-phosphoglycerate = phosphoenolpyruvate + H2O. It functions in the pathway carbohydrate degradation; glycolysis; pyruvate from D-glyceraldehyde 3-phosphate: step 4/5. Catalyzes the reversible conversion of 2-phosphoglycerate (2-PG) into phosphoenolpyruvate (PEP). It is essential for the degradation of carbohydrates via glycolysis. The polypeptide is Enolase (Endomicrobium trichonymphae).